We begin with the raw amino-acid sequence, 408 residues long: LIN1-like protein (408 aa).

Positions 1-161 are disordered; sequence MKRTLRNPGN…SVPSSPKRMS (161 aa). The span at 41–52 shows a compositional bias: acidic residues; that stretch reads YYESESEEDEDQ. Basic and acidic residues-rich tracts occupy residues 53–62, 73–109, and 119–129; these read ILNKEKKEGQ, DEKR…KEVL, and NGKYSKLRYED. One can recognise a GYF domain in the interval 344–402; that stretch reads SSQYNFKWEFDDKTYGPYTASQIQAWSNEGYFTDAKHAAFIQLANMDEWMYPNNICFCD.

This sequence belongs to the LIN1 family.

The chain is LIN1-like protein from Schizosaccharomyces pombe (strain 972 / ATCC 24843) (Fission yeast).